We begin with the raw amino-acid sequence, 1014 residues long: MPASAPPRRPRPPPPSLSLSLLLVLLGLAGRRLRAEPGDGAQTWARFARPPAPEAAGLFQGTFPDGFLWAVGSAAYQTEGGWQQHGKGASIWDTFTHHPLAPPGDSRIANVPSGAPSPLQPATGDVASDSYNNVFRDTEALRELGVTHYRFSISWARVLPNGSAGVPNREGLRYYRRLLERLRELGVQPVVTLYHWDLPQRLQDAYGGWANRALADHFRDYAELCFRHFGGQVKYWITIDNPYVVAWHGYATGRLAPGIRGSPRLGYLVAHNLLLAHAKVWHLYNTSFRPTQGGQVSIALSSHWINPRRMTDHSIKECQKSLDFVLGWFAKPIFIDGDYPESMKNNLSSLLPDFTESEKKFIKGTADFFALSFGPTLSFQLLDPHMKFRQLESPSLRQLLSWIDLEYNHPQIFIVENGWFVSGTTKRDDAKYMYYLKKFIMETLKAIKLDGVDVIGYTAWSLMDGFEWHRGYSIRRGLFYVDFLSQEKTLLPKSSALFYQKLIEKNGFPPLPENQPLEGTFPCDFAWGIVDNYIQVDTTLSQFTDLNVYLWDVHHSKRLIKVDGVVTKKRKSYCVDFAAIQPQITLLQEMHVTHFRFSLDWALILPLGNQSQVNHTILQYYRCMVSELVRVNITPVVALWQPVAPNQGLPRLLARQGAWENPYTALAFAEYARLCFQELGHHVKLWITMNEPYTRNMTYSAGHNLLKAHALAWHVYNEKFRHAQNGKISIALQADWIEPACPFSQKDKEVAERVLEFDIGWLAEPIFGSGDYPWVMRDWLNQRNNFLLPYFTEDEKKLIQGTFDFLALSHYTTILVDSEKEDPIKYNDYLEVQEMTDITWLNSPSQVAVVPWGLRKVLNWLKFKYGDLPMYIISNGIDDGLHAEDDQLRVYYMQNYINEALKAHILDGINLCGYFAYSFNDRTAPRFGLYRFAADQFEPKPSMKHYRKIIDSNGFPGPETLEKFCPEEFTVCTECSFFHTRKPLVAFIAFLFFAFIVSLSLIFYYSKKGRRRYQ.

The N-terminal stretch at 1–35 (MPASAPPRRPRPPPPSLSLSLLLVLLGLAGRRLRA) is a signal peptide. Over 36 to 983 (EPGDGAQTWA…ECSFFHTRKP (948 aa)) the chain is Extracellular. Glycosyl hydrolase-1 regions lie at residues 59-508 (FQGT…KNGF) and 517-955 (LEGT…SNGF). N161, N285, N346, N609, N614, and N696 each carry an N-linked (GlcNAc...) asparagine glycan. A helical membrane pass occupies residues 984-1004 (LVAFIAFLFFAFIVSLSLIFY). The Cytoplasmic segment spans residues 1005–1014 (YSKKGRRRYQ).

The protein belongs to the glycosyl hydrolase 1 family. Klotho subfamily. As to quaternary structure, homodimer. Interacts with FGF23 and FGFR1.

Its subcellular location is the cell membrane. The protein resides in the apical cell membrane. It is found in the secreted. It catalyses the reaction a beta-D-glucuronoside + H2O = D-glucuronate + an alcohol. In terms of biological role, may have weak glycosidase activity towards glucuronylated steroids. However, it lacks essential active site Glu residues at positions 241 and 874, suggesting it may be inactive as a glycosidase in vivo. May be involved in the regulation of calcium and phosphorus homeostasis by inhibiting the synthesis of active vitamin D. Essential factor for the specific interaction between FGF23 and FGFR1. Functionally, the Klotho peptide generated by cleavage of the membrane-bound isoform may be an anti-aging circulating hormone which would extend life span by inhibiting insulin/IGF1 signaling. The protein is Klotho (KL) of Macaca fascicularis (Crab-eating macaque).